Here is a 233-residue protein sequence, read N- to C-terminus: Adenosine 5'-phosphosulfate reductase (233 aa).

Residues Cys120, Cys121, Cys203, and Cys206 each contribute to the [4Fe-4S] cluster site. The Nucleophile; cysteine thiosulfonate intermediate role is filled by Cys229.

Belongs to the PAPS reductase family. CysH subfamily. [4Fe-4S] cluster is required as a cofactor.

Its subcellular location is the cytoplasm. It carries out the reaction [thioredoxin]-disulfide + sulfite + AMP + 2 H(+) = adenosine 5'-phosphosulfate + [thioredoxin]-dithiol. It participates in sulfur metabolism; hydrogen sulfide biosynthesis; sulfite from sulfate. Its function is as follows. Catalyzes the formation of sulfite from adenosine 5'-phosphosulfate (APS) using thioredoxin as an electron donor. The protein is Adenosine 5'-phosphosulfate reductase of Bacillus velezensis (strain DSM 23117 / BGSC 10A6 / LMG 26770 / FZB42) (Bacillus amyloliquefaciens subsp. plantarum).